The primary structure comprises 169 residues: 6,7-dimethyl-8-ribityllumazine synthase (169 aa).

5-amino-6-(D-ribitylamino)uracil-binding positions include Tyr-30, 61–63 (ALE), and 90–92 (CVI). 95–96 (ET) is a (2S)-2-hydroxy-3-oxobutyl phosphate binding site. His-98 acts as the Proton donor in catalysis. Asn-123 contacts 5-amino-6-(D-ribitylamino)uracil. Arg-137 provides a ligand contact to (2S)-2-hydroxy-3-oxobutyl phosphate.

Belongs to the DMRL synthase family.

It catalyses the reaction (2S)-2-hydroxy-3-oxobutyl phosphate + 5-amino-6-(D-ribitylamino)uracil = 6,7-dimethyl-8-(1-D-ribityl)lumazine + phosphate + 2 H2O + H(+). It functions in the pathway cofactor biosynthesis; riboflavin biosynthesis; riboflavin from 2-hydroxy-3-oxobutyl phosphate and 5-amino-6-(D-ribitylamino)uracil: step 1/2. Functionally, catalyzes the formation of 6,7-dimethyl-8-ribityllumazine by condensation of 5-amino-6-(D-ribitylamino)uracil with 3,4-dihydroxy-2-butanone 4-phosphate. This is the penultimate step in the biosynthesis of riboflavin. The sequence is that of 6,7-dimethyl-8-ribityllumazine synthase from Methylorubrum populi (strain ATCC BAA-705 / NCIMB 13946 / BJ001) (Methylobacterium populi).